The chain runs to 126 residues: Ribosome-binding factor A (126 aa).

The protein belongs to the RbfA family. Monomer. Binds 30S ribosomal subunits, but not 50S ribosomal subunits or 70S ribosomes.

The protein resides in the cytoplasm. Functionally, one of several proteins that assist in the late maturation steps of the functional core of the 30S ribosomal subunit. Associates with free 30S ribosomal subunits (but not with 30S subunits that are part of 70S ribosomes or polysomes). Required for efficient processing of 16S rRNA. May interact with the 5'-terminal helix region of 16S rRNA. This chain is Ribosome-binding factor A, found in Thermosipho africanus (strain TCF52B).